We begin with the raw amino-acid sequence, 237 residues long: MKLGVFELTDCGGCALNLLFLYDKLLDLLEFYEIAEFHMATSKKSREKIDVALVTGTVSTQRDLEVLRDARNRSEYLIALGTCATHGSVQGVIENSKEAYRRVYGNGKPPVKLLNPKPVTDYVPVDFAIPGCPYDKEEVFQVLIDIAKGIEPVAKDYPVCLECKLNEYECVLLKKRIPCLGPVTAGGCNAKCPSYGLGCIGCRGPSLDNNVPGMFEVLKEILPDEEIARKLRTFARW.

Positions 11, 14, 83, 132, 160, 163, 170, and 179 each coordinate [4Fe-4S] cluster. Positions 188, 192, 199, and 202 each coordinate [3Fe-4S] cluster.

Belongs to the [NiFe]/[NiFeSe] hydrogenase small subunit family. In terms of assembly, dimer of heterotetramer of alpha, beta, gamma and delta subunits. The nickel-containing alpha and delta subunits constitute the hydrogenase activity. The beta and gamma subunits (flavin-containing dimer) constitute the sulfur reductase activity. Ni(2+) is required as a cofactor. It depends on [4Fe-4S] cluster as a cofactor. The cofactor is [3Fe-4S] cluster.

It localises to the cytoplasm. The catalysed reaction is H2 + NADP(+) = NADPH + H(+). It catalyses the reaction H2 + NAD(+) = NADH + H(+). In terms of biological role, part of a bifunctional enzyme complex that functions as a hydrogen-evolving hydrogenase with sulfur-reducing activity. May play a role in hydrogen cycling during fermentative growth. Activity exhibited with NAD in addition to NADPH. The alpha and delta subunits form the hydrogenase component that catalyzes the reduction of protons to evolve hydrogen. This chain is Sulfhydrogenase 2 subunit delta, found in Pyrococcus furiosus (strain ATCC 43587 / DSM 3638 / JCM 8422 / Vc1).